The following is a 741-amino-acid chain: Ethylene receptor (741 aa).

3 consecutive transmembrane segments (helical) span residues isoleucine 23–valine 43, tryptophan 53–leucine 73, and valine 92–leucine 112. Cu cation-binding residues include cysteine 65 and histidine 69. Residues aspartate 158–leucine 307 form the GAF domain. In terms of domain architecture, Histidine kinase spans valine 350–glutamate 589. At histidine 353 the chain carries Phosphohistidine; by autocatalysis. The Response regulatory domain occupies lysine 615 to leucine 732. A 4-aspartylphosphate modification is found at aspartate 663.

Belongs to the ethylene receptor family. As to quaternary structure, homodimer; disulfide-linked. The cofactor is Cu cation. Post-translationally, activation probably requires a transfer of a phosphate group between a His in the transmitter domain and an Asp of the receiver domain.

Its subcellular location is the endoplasmic reticulum membrane. The enzyme catalyses ATP + protein L-histidine = ADP + protein N-phospho-L-histidine.. Functionally, may act early in the ethylene signal transduction pathway, possibly as an ethylene receptor, or as a regulator of the pathway. The chain is Ethylene receptor (ETR1) from Malus domestica (Apple).